Consider the following 211-residue polypeptide: Imidazole glycerol phosphate synthase subunit HisH (211 aa).

Residues 1–206 form the Glutamine amidotransferase type-1 domain; it reads MIGIIDYGRG…GKWVNEDATV (206 aa). The Nucleophile role is filled by C79. Active-site residues include H181 and E183.

In terms of assembly, heterodimer of HisH and HisF.

It is found in the cytoplasm. It carries out the reaction 5-[(5-phospho-1-deoxy-D-ribulos-1-ylimino)methylamino]-1-(5-phospho-beta-D-ribosyl)imidazole-4-carboxamide + L-glutamine = D-erythro-1-(imidazol-4-yl)glycerol 3-phosphate + 5-amino-1-(5-phospho-beta-D-ribosyl)imidazole-4-carboxamide + L-glutamate + H(+). The enzyme catalyses L-glutamine + H2O = L-glutamate + NH4(+). It functions in the pathway amino-acid biosynthesis; L-histidine biosynthesis; L-histidine from 5-phospho-alpha-D-ribose 1-diphosphate: step 5/9. In terms of biological role, IGPS catalyzes the conversion of PRFAR and glutamine to IGP, AICAR and glutamate. The HisH subunit catalyzes the hydrolysis of glutamine to glutamate and ammonia as part of the synthesis of IGP and AICAR. The resulting ammonia molecule is channeled to the active site of HisF. This Desulfitobacterium hafniense (strain Y51) protein is Imidazole glycerol phosphate synthase subunit HisH.